Here is a 1975-residue protein sequence, read N- to C-terminus: Cadherin-87A (1975 aa).

The first 17 residues, 1–17 (MKLPLGLLMICLGLTLA), serve as a signal peptide directing secretion. Residues 18–1775 (KGETNLPPVF…AIVQDEFDLA (1758 aa)) are Extracellular-facing. 14 Cadherin domains span residues 28–132 (TQTL…PPEF), 133–245 (QNTP…PPVF), 246–358 (QGSL…PPVF), 359–472 (NHKE…KPVF), 473–669 (EQES…PPVC), 670–774 (ESPL…VPNF), 775–878 (EQQS…DPYF), 879–998 (VPAT…PPRF), 999–1103 (NAPW…DPKF), 1104–1211 (SQSD…APVF), 1212–1318 (TRDV…KPEF), 1319–1431 (VIPA…RPEF), 1432–1553 (PDAS…PPVF), and 1554–1677 (EKPI…PPEE). N-linked (GlcNAc...) asparagine glycans are attached at residues N39, N77, and N203. Residue N424 is glycosylated (N-linked (GlcNAc...) asparagine). The disordered stretch occupies residues 535–560 (CHDNGESNRRERRDLNEDEHVEEDDG). A compositionally biased stretch (basic and acidic residues) spans 537-549 (DNGESNRRERRDL). The span at 550–560 (NEDEHVEEDDG) shows a compositional bias: acidic residues. N730 and N761 each carry an N-linked (GlcNAc...) asparagine glycan. N1039, N1049, N1111, N1163, N1217, N1325, N1349, N1492, N1576, and N1691 each carry an N-linked (GlcNAc...) asparagine glycan. A helical membrane pass occupies residues 1776–1796 (VAGLVALVIVLFVGVISFIVL). At 1797-1975 (CCCLKHWNLS…DGDDAVAELI (179 aa)) the chain is on the cytoplasmic side. The segment covering 1887 to 1899 (YATIQPRNNQNRL) has biased composition (polar residues). The interval 1887-1916 (YATIQPRNNQNRLTGGGGAGGGSMRSGGGA) is disordered. Positions 1900-1916 (TGGGGAGGGSMRSGGGA) are enriched in gly residues.

The protein localises to the cell membrane. Its function is as follows. Cadherins are calcium-dependent cell adhesion proteins. They preferentially interact with themselves in a homophilic manner in connecting cells. The chain is Cadherin-87A (Cad87A) from Drosophila melanogaster (Fruit fly).